The following is a 109-amino-acid chain: COX assembly mitochondrial protein 2 (109 aa).

The region spanning Phe10–Asn54 is the CHCH domain. 2 short sequence motifs (cx9C motif) span residues Cys13–Cys23 and Cys36–Cys46. Disulfide bonds link Cys13–Cys46 and Cys23–Cys36.

The protein belongs to the CMC family. Interacts with CMC1.

The protein localises to the mitochondrion inner membrane. It is found in the mitochondrion intermembrane space. In terms of biological role, required for mitochondrial cytochrome c oxidase (COX) assembly and respiration. May be involved in copper trafficking and distribution to mitochondrial COX and SOD1. The chain is COX assembly mitochondrial protein 2 (CMC2) from Saccharomyces cerevisiae (strain ATCC 204508 / S288c) (Baker's yeast).